Reading from the N-terminus, the 172-residue chain is Shikimate kinase (172 aa).

Position 11 to 16 (11 to 16) interacts with ATP; that stretch reads GCGKST. Mg(2+) is bound at residue Ser-15. Residues Asp-33, Arg-57, and Gly-80 each coordinate substrate. Residue Arg-120 participates in ATP binding. Arg-142 is a substrate binding site. Arg-158 contacts ATP.

The protein belongs to the shikimate kinase family. In terms of assembly, monomer. Mg(2+) is required as a cofactor.

It localises to the cytoplasm. It catalyses the reaction shikimate + ATP = 3-phosphoshikimate + ADP + H(+). Its pathway is metabolic intermediate biosynthesis; chorismate biosynthesis; chorismate from D-erythrose 4-phosphate and phosphoenolpyruvate: step 5/7. Catalyzes the specific phosphorylation of the 3-hydroxyl group of shikimic acid using ATP as a cosubstrate. The polypeptide is Shikimate kinase (Flavobacterium johnsoniae (strain ATCC 17061 / DSM 2064 / JCM 8514 / BCRC 14874 / CCUG 350202 / NBRC 14942 / NCIMB 11054 / UW101) (Cytophaga johnsonae)).